The following is a 132-amino-acid chain: Small ribosomal subunit protein uS11 (132 aa).

It belongs to the universal ribosomal protein uS11 family. Part of the 30S ribosomal subunit. Interacts with proteins S7 and S18. Binds to IF-3.

In terms of biological role, located on the platform of the 30S subunit, it bridges several disparate RNA helices of the 16S rRNA. Forms part of the Shine-Dalgarno cleft in the 70S ribosome. This chain is Small ribosomal subunit protein uS11, found in Clostridium kluyveri (strain NBRC 12016).